The primary structure comprises 252 residues: MTLPAARTGVLARKVGMTRIFAADGRHVPVTVLSLDGCQVVGVRSEEERSVTTKKGGQVTRTDGYKAVIMGSGDKKAKNTTKALRGQFAKAGVAPKAKLKEFRVSGDLPEVGSTVQADHFAEGQLVDVSAMSIGKGFAGAMKRWNFSGLRASHGVSISHRAHGSTGMNQDPGRVFKNKKMAGHLGDERVTTQNLVVVRTDVERGLILVKGSVPGHDGTFVEVRDAVKKALPADAPAAGSFKAPEKLSAGGEG.

Glutamine 169 is modified (N5-methylglutamine).

This sequence belongs to the universal ribosomal protein uL3 family. As to quaternary structure, part of the 50S ribosomal subunit. Forms a cluster with proteins L14 and L19. Post-translationally, methylated by PrmB.

Its function is as follows. One of the primary rRNA binding proteins, it binds directly near the 3'-end of the 23S rRNA, where it nucleates assembly of the 50S subunit. This Hyphomonas neptunium (strain ATCC 15444) protein is Large ribosomal subunit protein uL3.